Consider the following 277-residue polypeptide: Alpha-ketoglutarate-dependent dioxygenase tstK (277 aa).

The protein belongs to the asaB hydroxylase/desaturase family.

It catalyses the reaction 2-[(1R,8S,14R,15R)-11-hydroxy-14,15-bis[(6E)-oct-6-en-1-yl]-3,5,9-trioxo-4,10-dioxatetracyclo[9.4.0.0(2,6).0(8,12)]pentadeca-2(6),12-dien-8-yl]acetate + 3 2-oxoglutarate + 3 O2 = phomoidride A + 3 succinate + 3 CO2 + H2O. In terms of biological role, alpha-ketoglutarate-dependent dioxygenase; part of the gene cluster that mediates the biosynthesis of the antihypercholesterolemic agents phomoidrides which are dimeric anhydrides. Within the pathway, tstK is responsible for the iterative oxidation necessary to convert prephomoidride to phomoidride A. The pathway begins with the highly reducing polyketide synthase tstiA that catalyzes the formation of a C12-fatty acyl-ACP, starting from one acetate and 5 malonate units. The hydrolase tstM is involved in the release of the C12-fatty acyl chain from phiA. The alkylcitrate synthase (ACS) tstJ and the alkylcitrate dehydratase (ACDH) tstI then give rise to decarboxylated monomeric anhydrides by coupling the C12-fatty acyl chain with oxalacetic acid. The cyclase tstC is responsible for the dimerization of the monomeric anhydrides which leads to the production of prephomoidride that contains the characteristic bicyclo[4.3.1]deca-1,6-diene system of phomoidrides. Iterative oxidation catalyzed by the alpha-ketoglutarate-dependent dioxygenase tstK produced then phomoidride A. Finally, the methyltransferase tstE converts phomoidride A to phomoidride B via an acetalization reaction. The phosphatidylethanolamine-binding protein tstB and tstN are not essential for dimerization and their functions have still to be determined. This chain is Alpha-ketoglutarate-dependent dioxygenase tstK, found in Talaromyces stipitatus (strain ATCC 10500 / CBS 375.48 / QM 6759 / NRRL 1006) (Penicillium stipitatum).